The chain runs to 152 residues: Ribonuclease HI (152 aa).

Residues 1–142 (MDSKVVIYTD…ADKLAVQGRE (142 aa)) enclose the RNase H type-1 domain. Mg(2+)-binding residues include Asp-10, Glu-48, Asp-70, and Asp-134.

Belongs to the RNase H family. Monomer. It depends on Mg(2+) as a cofactor.

The protein resides in the cytoplasm. It catalyses the reaction Endonucleolytic cleavage to 5'-phosphomonoester.. Functionally, endonuclease that specifically degrades the RNA of RNA-DNA hybrids. The protein is Ribonuclease HI of Rickettsia conorii (strain ATCC VR-613 / Malish 7).